The following is a 205-amino-acid chain: Holliday junction branch migration complex subunit RuvA (205 aa).

The segment at 1 to 62 is domain I; the sequence is MFEYVTGYVE…EDIMALYGFK (62 aa). The segment at 63-141 is domain II; that stretch reads TREERLLFTK…DVVPDAFVDL (79 aa). The flexible linker stretch occupies residues 142 to 152; it reads FSDTESFDTKK. A domain III region spans residues 153–205; sequence GSSVELDEALEALRALGYAEREVSRVVPELLKESLTTDQYIKKALSLLLNGKR.

This sequence belongs to the RuvA family. As to quaternary structure, homotetramer. Forms an RuvA(8)-RuvB(12)-Holliday junction (HJ) complex. HJ DNA is sandwiched between 2 RuvA tetramers; dsDNA enters through RuvA and exits via RuvB. An RuvB hexamer assembles on each DNA strand where it exits the tetramer. Each RuvB hexamer is contacted by two RuvA subunits (via domain III) on 2 adjacent RuvB subunits; this complex drives branch migration. In the full resolvosome a probable DNA-RuvA(4)-RuvB(12)-RuvC(2) complex forms which resolves the HJ.

The protein resides in the cytoplasm. Functionally, the RuvA-RuvB-RuvC complex processes Holliday junction (HJ) DNA during genetic recombination and DNA repair, while the RuvA-RuvB complex plays an important role in the rescue of blocked DNA replication forks via replication fork reversal (RFR). RuvA specifically binds to HJ cruciform DNA, conferring on it an open structure. The RuvB hexamer acts as an ATP-dependent pump, pulling dsDNA into and through the RuvAB complex. HJ branch migration allows RuvC to scan DNA until it finds its consensus sequence, where it cleaves and resolves the cruciform DNA. In Bacillus mycoides (strain KBAB4) (Bacillus weihenstephanensis), this protein is Holliday junction branch migration complex subunit RuvA.